Here is a 248-residue protein sequence, read N- to C-terminus: Pyridoxine 5'-phosphate synthase (248 aa).

Asn12 contacts 3-amino-2-oxopropyl phosphate. 14–15 (DH) provides a ligand contact to 1-deoxy-D-xylulose 5-phosphate. Arg23 is a 3-amino-2-oxopropyl phosphate binding site. The active-site Proton acceptor is the His48. The 1-deoxy-D-xylulose 5-phosphate site is built by Arg50 and His55. The Proton acceptor role is filled by Glu75. Thr105 serves as a coordination point for 1-deoxy-D-xylulose 5-phosphate. Residue His196 is the Proton donor of the active site. Residues Gly197 and 218–219 (GH) contribute to the 3-amino-2-oxopropyl phosphate site.

Belongs to the PNP synthase family. As to quaternary structure, homooctamer; tetramer of dimers.

It localises to the cytoplasm. The catalysed reaction is 3-amino-2-oxopropyl phosphate + 1-deoxy-D-xylulose 5-phosphate = pyridoxine 5'-phosphate + phosphate + 2 H2O + H(+). The protein operates within cofactor biosynthesis; pyridoxine 5'-phosphate biosynthesis; pyridoxine 5'-phosphate from D-erythrose 4-phosphate: step 5/5. Its function is as follows. Catalyzes the complicated ring closure reaction between the two acyclic compounds 1-deoxy-D-xylulose-5-phosphate (DXP) and 3-amino-2-oxopropyl phosphate (1-amino-acetone-3-phosphate or AAP) to form pyridoxine 5'-phosphate (PNP) and inorganic phosphate. This Azotobacter vinelandii (strain DJ / ATCC BAA-1303) protein is Pyridoxine 5'-phosphate synthase.